The chain runs to 347 residues: tRNA N6-adenosine threonylcarbamoyltransferase (347 aa).

Fe cation-binding residues include His113 and His117. Residues 136–140, Asp170, Gly183, Asp187, and Asn282 contribute to the substrate site; that span reads IVSGG. A Fe cation-binding site is contributed by Asp310.

The protein belongs to the KAE1 / TsaD family. Fe(2+) is required as a cofactor.

It is found in the cytoplasm. It carries out the reaction L-threonylcarbamoyladenylate + adenosine(37) in tRNA = N(6)-L-threonylcarbamoyladenosine(37) in tRNA + AMP + H(+). In terms of biological role, required for the formation of a threonylcarbamoyl group on adenosine at position 37 (t(6)A37) in tRNAs that read codons beginning with adenine. Is involved in the transfer of the threonylcarbamoyl moiety of threonylcarbamoyl-AMP (TC-AMP) to the N6 group of A37, together with TsaE and TsaB. TsaD likely plays a direct catalytic role in this reaction. The protein is tRNA N6-adenosine threonylcarbamoyltransferase of Bifidobacterium adolescentis (strain ATCC 15703 / DSM 20083 / NCTC 11814 / E194a).